Reading from the N-terminus, the 273-residue chain is Cell division protein FtsQ (273 aa).

Residues 1–20 (MPPRKAHTTRRTPAKKSGVR) are Cytoplasmic-facing. Residues 21 to 43 (RRLLRLLVTGVPVLALCGVAWLW) traverse the membrane as a helical segment. The Periplasmic portion of the chain corresponds to 44-273 (LESVRLTRIE…STQKSAMGHE (230 aa)). The POTRA domain occupies 47 to 115 (VRLTRIEIVG…GTLRIAVEER (69 aa)).

The protein belongs to the FtsQ/DivIB family. FtsQ subfamily.

It localises to the cell inner membrane. Its function is as follows. Essential cell division protein. This is Cell division protein FtsQ from Rhodothermus marinus (strain ATCC 43812 / DSM 4252 / R-10) (Rhodothermus obamensis).